The following is a 472-amino-acid chain: 3-isopropylmalate dehydratase large subunit (472 aa).

[4Fe-4S] cluster-binding residues include cysteine 353, cysteine 414, and cysteine 417.

This sequence belongs to the aconitase/IPM isomerase family. LeuC type 1 subfamily. As to quaternary structure, heterodimer of LeuC and LeuD. [4Fe-4S] cluster serves as cofactor.

The catalysed reaction is (2R,3S)-3-isopropylmalate = (2S)-2-isopropylmalate. It functions in the pathway amino-acid biosynthesis; L-leucine biosynthesis; L-leucine from 3-methyl-2-oxobutanoate: step 2/4. Functionally, catalyzes the isomerization between 2-isopropylmalate and 3-isopropylmalate, via the formation of 2-isopropylmaleate. The polypeptide is 3-isopropylmalate dehydratase large subunit (Psychrobacter cryohalolentis (strain ATCC BAA-1226 / DSM 17306 / VKM B-2378 / K5)).